The sequence spans 292 residues: MIAGSMVALVTPFDAQGRLDWDSLAKLVDFHLQEGTNAIVAVGTTGESATLDVEEHIQVIRRVVDQVKGRIPVIAGTGANSTREAVALTEAAKSGGADACLLVTPYYNKPTQEGMYQHFRHIAEAVAIPQILYNVPGRTSCDMLPETVERLSKVPNIIGIKEATGDLQRAKEVIERVGKDFLVYSGDDATAVELMLLGGKGNISVTANVAPRAMSDLCAAAMRGDAAAARAINDRLMPLHKALFIESNPIPVKWALHEMGLIPEGIRLPLTWLSPRCHEPLRQAMRQTGVLA.

Residue Thr-45 participates in pyruvate binding. Catalysis depends on Tyr-133, which acts as the Proton donor/acceptor. The active-site Schiff-base intermediate with substrate is the Lys-161. Residue Ile-203 coordinates pyruvate.

This sequence belongs to the DapA family. As to quaternary structure, homodimer.

It is found in the cytoplasm. It carries out the reaction L-aspartate 4-semialdehyde + pyruvate = (2S,4S)-4-hydroxy-2,3,4,5-tetrahydrodipicolinate + H2O + H(+). Its pathway is amino-acid biosynthesis; L-lysine biosynthesis via DAP pathway; (S)-tetrahydrodipicolinate from L-aspartate: step 3/4. In terms of biological role, catalyzes the condensation of (S)-aspartate-beta-semialdehyde [(S)-ASA] and pyruvate to 4-hydroxy-tetrahydrodipicolinate (HTPA). In Pseudomonas aeruginosa (strain ATCC 15692 / DSM 22644 / CIP 104116 / JCM 14847 / LMG 12228 / 1C / PRS 101 / PAO1), this protein is 4-hydroxy-tetrahydrodipicolinate synthase.